The sequence spans 114 residues: UPF0145 protein Acry_1752 (114 aa).

It belongs to the UPF0145 family.

This Acidiphilium cryptum (strain JF-5) protein is UPF0145 protein Acry_1752.